The following is a 336-amino-acid chain: Ketol-acid reductoisomerase (NADP(+)) (336 aa).

The KARI N-terminal Rossmann domain maps to 1–182; the sequence is MAVIYYDKDA…GVTRAGVIET (182 aa). Residues 25-28, Arg48, Ser51, Ser53, and 83-86 contribute to the NADP(+) site; these read YGSQ and DEHQ. Residue His108 is part of the active site. Gly134 contributes to the NADP(+) binding site. Positions 183-328 constitute a KARI C-terminal knotted domain; it reads TFKEETETDL…KELRKMMPWL (146 aa). The Mg(2+) site is built by Asp191, Glu195, Glu227, and Glu231. Substrate is bound at residue Ser252.

This sequence belongs to the ketol-acid reductoisomerase family. The cofactor is Mg(2+).

The enzyme catalyses (2R)-2,3-dihydroxy-3-methylbutanoate + NADP(+) = (2S)-2-acetolactate + NADPH + H(+). It carries out the reaction (2R,3R)-2,3-dihydroxy-3-methylpentanoate + NADP(+) = (S)-2-ethyl-2-hydroxy-3-oxobutanoate + NADPH + H(+). The protein operates within amino-acid biosynthesis; L-isoleucine biosynthesis; L-isoleucine from 2-oxobutanoate: step 2/4. It participates in amino-acid biosynthesis; L-valine biosynthesis; L-valine from pyruvate: step 2/4. Involved in the biosynthesis of branched-chain amino acids (BCAA). Catalyzes an alkyl-migration followed by a ketol-acid reduction of (S)-2-acetolactate (S2AL) to yield (R)-2,3-dihydroxy-isovalerate. In the isomerase reaction, S2AL is rearranged via a Mg-dependent methyl migration to produce 3-hydroxy-3-methyl-2-ketobutyrate (HMKB). In the reductase reaction, this 2-ketoacid undergoes a metal-dependent reduction by NADPH to yield (R)-2,3-dihydroxy-isovalerate. The protein is Ketol-acid reductoisomerase (NADP(+)) of Thermotoga maritima (strain ATCC 43589 / DSM 3109 / JCM 10099 / NBRC 100826 / MSB8).